Consider the following 205-residue polypeptide: Ras-related protein Rab-1A (205 aa).

At Ser-2 the chain carries N-acetylserine. Residues Ser-20, Gly-21, Gly-23, Lys-24, Ser-25, Cys-26, Glu-38, and Thr-43 each contribute to the GTP site. Position 25 (Ser-25) interacts with Mg(2+). The Switch 1 signature appears at 34–48 (DTYTESYISTIGVDF). Thr-43 is a binding site for Mg(2+). Residues Lys-49 and Lys-61 each participate in a glycyl lysine isopeptide (Lys-Gly) (interchain with G-Cter in ubiquitin) cross-link. Asp-66 provides a ligand contact to Mg(2+). The Switch 2 motif lies at 66–83 (DTAGQERFRTITSSYYRG). Positions 69, 124, 125, 127, 155, and 156 each coordinate GTP. Positions 178–205 (PGATAGGAEKSNVKIQSTPVKQSGGGCC) are disordered. Phosphoserine is present on Ser-194. 2 S-geranylgeranyl cysteine lipidation sites follow: Cys-204 and Cys-205.

Belongs to the small GTPase superfamily. Rab family. May interact with YIPF5. Interacts with C9orf72; the interaction mediates recruitment of RAB1A to the ATG1/ULK1 kinase complex. Interacts with GDI1; this promotes dissociation from membranes. Mg(2+) serves as cofactor. In terms of processing, phosphorylated by CDK1 kinase during mitosis. Ubiquitinated via 'Lys-11'-linked ubiquitination on Lys-49 and Lys-61; impairing the recruitment of guanosine diphosphate (GDP) dissociation inhibitor 1/GDI1.

It is found in the golgi apparatus. Its subcellular location is the endoplasmic reticulum. The protein localises to the early endosome. It localises to the cytoplasm. The protein resides in the cytosol. It is found in the membrane. Its subcellular location is the melanosome. The catalysed reaction is GTP + H2O = GDP + phosphate + H(+). Regulated by guanine nucleotide exchange factors (GEFs) which promote the exchange of bound GDP for free GTP. Regulated by GTPase activating proteins (GAPs) which increase the GTP hydrolysis activity. Inhibited by GDP dissociation inhibitors (GDIs). Its function is as follows. The small GTPases Rab are key regulators of intracellular membrane trafficking, from the formation of transport vesicles to their fusion with membranes. Rabs cycle between an inactive GDP-bound form and an active GTP-bound form that is able to recruit to membranes different sets of downstream effectors directly responsible for vesicle formation, movement, tethering and fusion. RAB1A regulates vesicular protein transport from the endoplasmic reticulum (ER) to the Golgi compartment and on to the cell surface, and plays a role in IL-8 and growth hormone secretion. Required to modulate the compacted morphology of the Golgi. Regulates the level of CASR present at the cell membrane. Plays a role in cell adhesion and cell migration, via its role in protein trafficking. Plays a role in autophagosome assembly and cellular defense reactions against pathogenic bacteria. Plays a role in microtubule-dependent protein transport by early endosomes and in anterograde melanosome transport. The sequence is that of Ras-related protein Rab-1A (RAB1A) from Canis lupus familiaris (Dog).